A 247-amino-acid chain; its full sequence is T-cell surface glycoprotein CD8 alpha chain (247 aa).

Residues 1-27 form the signal peptide; that stretch reads MASPLTRFLSLNLLLLGESIILGSGEA. Positions 28-139 constitute an Ig-like V-type domain; it reads KPQAPELRIF…SVISNSVMYF (112 aa). Residues 28 to 196 are Extracellular-facing; the sequence is KPQAPELRIF…TGLDFACDIY (169 aa). C53 and C129 are oxidised to a cystine. N-linked (GlcNAc...) asparagine glycosylation is found at N69, N97, and N150. The tract at residues 156 to 182 is disordered; that stretch reads PVLRTPSPVHPTGTSQPQRPEDCRPRG. The helical transmembrane segment at 197–217 threads the bilayer; that stretch reads IWAPLAGICVALLLSLIITLI. Over 218–247 the chain is Cytoplasmic; it reads CYHRSRKRVCKCPRPLVRQEGKPRPSEKIV.

As to quaternary structure, forms disulfide-linked heterodimers with CD8B at the cell surface. Also forms homodimers in several cell types including NK-cells or peripheral blood T-lymphocytes. Interacts with the MHC class I HLA-A/B2M dimer. Interacts with LCK in a zinc-dependent manner. Palmitoylated, but association with CD8B seems to be more important for the enrichment of CdD8A in lipid rafts. In terms of processing, phosphorylated in cytotoxic T-lymphocytes (CTLs) following activation.

The protein localises to the cell membrane. Functionally, integral membrane glycoprotein that plays an essential role in the immune response and serves multiple functions in responses against both external and internal offenses. In T-cells, functions primarily as a coreceptor for MHC class I molecule:peptide complex. The antigens presented by class I peptides are derived from cytosolic proteins while class II derived from extracellular proteins. Interacts simultaneously with the T-cell receptor (TCR) and the MHC class I proteins presented by antigen presenting cells (APCs). In turn, recruits the Src kinase LCK to the vicinity of the TCR-CD3 complex. LCK then initiates different intracellular signaling pathways by phosphorylating various substrates ultimately leading to lymphokine production, motility, adhesion and activation of cytotoxic T-lymphocytes (CTLs). This mechanism enables CTLs to recognize and eliminate infected cells and tumor cells. In NK-cells, the presence of CD8A homodimers at the cell surface provides a survival mechanism allowing conjugation and lysis of multiple target cells. CD8A homodimer molecules also promote the survival and differentiation of activated lymphocytes into memory CD8 T-cells. This chain is T-cell surface glycoprotein CD8 alpha chain (Cd8a), found in Mus musculus (Mouse).